Reading from the N-terminus, the 89-residue chain is Small ribosomal subunit protein uS19 (89 aa).

The protein belongs to the universal ribosomal protein uS19 family.

Functionally, protein S19 forms a complex with S13 that binds strongly to the 16S ribosomal RNA. This chain is Small ribosomal subunit protein uS19, found in Xylella fastidiosa (strain 9a5c).